The following is a 2273-amino-acid chain: Acetyl-CoA carboxylase, mitochondrial (2273 aa).

Residues 1-104 (KGKTITHGQS…RGNIHKHTRL (104 aa)) constitute a mitochondrion transit peptide. In terms of domain architecture, Biotin carboxylation spans 134–635 (VISKILIANN…STGWLDDLIL (502 aa)). One can recognise an ATP-grasp domain in the interval 292–484 (KTNFVSVPDD…LPATQLQIAM (193 aa)). 332–337 (GGGGKG) provides a ligand contact to ATP. The active site involves R459. Residues 763–837 (LEAELNPTQV…EAGDVIAKLT (75 aa)) enclose the Biotinyl-binding domain. K804 carries the N6-biotinyllysine modification. Residues 1532–1867 (PYSVKDWLQP…KRDMSPPLLE (336 aa)) enclose the CoA carboxyltransferase N-terminal domain. Positions 1532-2187 (PYSVKDWLQP…EGQVIKRLQK (656 aa)) are carboxyltransferase. CoA-binding residues include R1776, K2080, and R2082. The CoA carboxyltransferase C-terminal domain occupies 1871 to 2187 (RWDRDVDFKP…EGQVIKRLQK (317 aa)).

Biotin serves as cofactor.

It is found in the mitochondrion. It catalyses the reaction hydrogencarbonate + acetyl-CoA + ATP = malonyl-CoA + ADP + phosphate + H(+). The catalysed reaction is N(6)-biotinyl-L-lysyl-[protein] + hydrogencarbonate + ATP = N(6)-carboxybiotinyl-L-lysyl-[protein] + ADP + phosphate + H(+). It participates in lipid metabolism; malonyl-CoA biosynthesis; malonyl-CoA from acetyl-CoA: step 1/1. Catalyzes the rate-limiting reaction in the mitochondrial fatty acid synthesis (FAS) type II pathway. Responsible for the production of the mitochondrial malonyl-CoA, used for the biosynthesis of the cofactor lipoic acid. This protein carries three functions: biotin carboxyl carrier protein, biotin carboxylase, and carboxyltransferase. The protein is Acetyl-CoA carboxylase, mitochondrial (HFA1) of Saccharomyces cerevisiae (strain Lalvin EC1118 / Prise de mousse) (Baker's yeast).